Consider the following 421-residue polypeptide: Gamma-glutamyl phosphate reductase (421 aa).

Belongs to the gamma-glutamyl phosphate reductase family.

It localises to the cytoplasm. The catalysed reaction is L-glutamate 5-semialdehyde + phosphate + NADP(+) = L-glutamyl 5-phosphate + NADPH + H(+). It functions in the pathway amino-acid biosynthesis; L-proline biosynthesis; L-glutamate 5-semialdehyde from L-glutamate: step 2/2. Catalyzes the NADPH-dependent reduction of L-glutamate 5-phosphate into L-glutamate 5-semialdehyde and phosphate. The product spontaneously undergoes cyclization to form 1-pyrroline-5-carboxylate. The polypeptide is Gamma-glutamyl phosphate reductase (Stutzerimonas stutzeri (strain A1501) (Pseudomonas stutzeri)).